The chain runs to 555 residues: Carboxysome assembly protein CcmM (555 aa).

The has carbonic anhydrase (CA) activity stretch occupies residues 1-209 (MAVRSTAAPP…CIAPLRNDQV (209 aa)). The active-site Proton donor/acceptor is Glu-56. Residues His-75, His-102, and His-107 each contribute to the Zn(2+) site. Cys-194 and Cys-200 are oxidised to a cystine. A rbcS-like repeat 1, SSUL1 region spans residues 223 to 315 (SSEVASNSLG…RVLETIIQRP (93 aa)). Disordered stretches follow at residues 323–351 (TSFK…SNGA) and 441–464 (NGQV…SGTA). Low complexity-rich tracts occupy residues 330–351 (SNTN…SNGA) and 445–464 (APSS…SGTA). The segment at 347-440 (YSNGATSGKV…RVLESIIQRP (94 aa)) is rbcS-like repeat 2, SSUL2. The rbcS-like repeat 3, SSUL3 stretch occupies residues 460 to 555 (SSGTATATAT…RVLETIIQRP (96 aa)).

It belongs to the gamma-class carbonic anhydrase family. Probable homotrimer; zinc is bound between adjacent monomers. Full length protein (M58) interacts with CcmN. The C-terminal RbcS-like domains (SSUL) bind to holo-RuBisCO, as does the M35 short form. Zn(2+) serves as cofactor. The first amino acid of the short form (equivalent to Val-226) is not seen in Edman degradation, while Ser-230 may be post-translationally modified. Migrates in gels as 2 about equal forms of about 60 and 35 kDa (called M58 and M35). They are probably the result of alternative translation initiation.

Its subcellular location is the carboxysome. The protein resides in the cytoplasm. It catalyses the reaction hydrogencarbonate + H(+) = CO2 + H2O. Its activity is regulated as follows. Carbonic anhydrase (CA) activity is probably under redox control to remain inactive in the cytoplasm. Carbonic anhydrase (CA) activity of full-length protein and N-terminal fragment is inhibited by ethoxyzolamide. N-terminal fragment CA activity is activated under oxidizing conditions and inhibited under reducing conditions. Its function is as follows. Functions as a scaffold protein for the assembly of beta-carboxysomes, initiates carboxysome assembly by coalescing RuBisCO (ribulose bisphosphate carboxylase, rbcL-rbcS). Produced as a full-length (M58) and a short form (M35), possibly by alternative translation initiation; probably both forms are required for correct carboxysome assembly and growth. In this strain both forms are equally abundant. Functionally, a moderately active carbonic anhydrase that catalyzes the reversible hydration of carbon dioxide. Essential to photosynthetic carbon dioxide fixation, supplies CO(2) to ribulose bisphosphate carboxylase (RuBisCO) in the carboxysome. Also hydrolyzes COS. Beta-carboxysome assembly initiates when soluble RuBisCO is condensed into a liquid matrix in a pre-carboxysome by the RbcS-like domains of probably both forms of CcmM. CcmN interacts with the N-terminus of full length CcmM, and then recruits the shell proteins (CcmK) via CcmN's encapsulation peptide. Shell formation requires both CcmK proteins and CcmO. CcmL caps the otherwise elongated carboxysome. Once fully encapsulated carboxysomes are formed, they migrate within the cell probably via interactions with the cytoskeleton. The chain is Carboxysome assembly protein CcmM from Nostoc sp. (strain PCC 7120 / SAG 25.82 / UTEX 2576).